A 157-amino-acid chain; its full sequence is Cytochrome b6-f complex subunit 4 (157 aa).

The next 3 membrane-spanning stretches (helical) occupy residues 35–55, 94–114, and 130–150; these read ILYIFPVVILGTISFSLGLGV, LVGVLSLASVPVILVLTAFIE, and LVYLTSTCYALWLGYGSVLGI.

This sequence belongs to the cytochrome b family. PetD subfamily. The 4 large subunits of the cytochrome b6-f complex are cytochrome b6, subunit IV (17 kDa polypeptide, petD), cytochrome f and the Rieske protein, while the 4 small subunits are petG, petL, petM and petN. The complex functions as a dimer.

It is found in the plastid. The protein localises to the chloroplast thylakoid membrane. Its function is as follows. Component of the cytochrome b6-f complex, which mediates electron transfer between photosystem II (PSII) and photosystem I (PSI), cyclic electron flow around PSI, and state transitions. The protein is Cytochrome b6-f complex subunit 4 of Amphidinium carterae (Dinoflagellate).